The primary structure comprises 307 residues: Ribonuclease Z (307 aa).

Zn(2+) contacts are provided by H61, H63, D65, H66, H138, D208, and H264. D65 serves as the catalytic Proton acceptor.

The protein belongs to the RNase Z family. As to quaternary structure, homodimer. Zn(2+) serves as cofactor.

It catalyses the reaction Endonucleolytic cleavage of RNA, removing extra 3' nucleotides from tRNA precursor, generating 3' termini of tRNAs. A 3'-hydroxy group is left at the tRNA terminus and a 5'-phosphoryl group is left at the trailer molecule.. Zinc phosphodiesterase, which displays some tRNA 3'-processing endonuclease activity. Probably involved in tRNA maturation, by removing a 3'-trailer from precursor tRNA. This Pyrococcus abyssi (strain GE5 / Orsay) protein is Ribonuclease Z.